The following is a 404-amino-acid chain: Cysteine desulfurase IscS (404 aa).

Pyridoxal 5'-phosphate contacts are provided by residues Ala-75–Thr-76, Asn-155, Gln-183, and Ser-203–His-205. Lys-206 carries the post-translational modification N6-(pyridoxal phosphate)lysine. Residue Thr-243 participates in pyridoxal 5'-phosphate binding. The Cysteine persulfide intermediate role is filled by Cys-328. Cys-328 contacts [2Fe-2S] cluster.

Belongs to the class-V pyridoxal-phosphate-dependent aminotransferase family. NifS/IscS subfamily. As to quaternary structure, homodimer. Forms a heterotetramer with IscU, interacts with other sulfur acceptors. Requires pyridoxal 5'-phosphate as cofactor.

The protein localises to the cytoplasm. The enzyme catalyses (sulfur carrier)-H + L-cysteine = (sulfur carrier)-SH + L-alanine. Its pathway is cofactor biosynthesis; iron-sulfur cluster biosynthesis. Functionally, master enzyme that delivers sulfur to a number of partners involved in Fe-S cluster assembly, tRNA modification or cofactor biosynthesis. Catalyzes the removal of elemental sulfur atoms from cysteine to produce alanine. Functions as a sulfur delivery protein for Fe-S cluster synthesis onto IscU, an Fe-S scaffold assembly protein, as well as other S acceptor proteins. The polypeptide is Cysteine desulfurase IscS (Neisseria meningitidis serogroup A / serotype 4A (strain DSM 15465 / Z2491)).